A 100-amino-acid polypeptide reads, in one-letter code: Large ribosomal subunit protein uL23 (100 aa).

The protein belongs to the universal ribosomal protein uL23 family. In terms of assembly, part of the 50S ribosomal subunit. Contacts protein L29, and trigger factor when it is bound to the ribosome.

Its function is as follows. One of the early assembly proteins it binds 23S rRNA. One of the proteins that surrounds the polypeptide exit tunnel on the outside of the ribosome. Forms the main docking site for trigger factor binding to the ribosome. The chain is Large ribosomal subunit protein uL23 from Thermotoga sp. (strain RQ2).